We begin with the raw amino-acid sequence, 157 residues long: Protein Smg homolog (157 aa).

Belongs to the Smg family.

This chain is Protein Smg homolog, found in Colwellia psychrerythraea (strain 34H / ATCC BAA-681) (Vibrio psychroerythus).